The primary structure comprises 388 residues: Endoglucanase 3 (388 aa).

A signal peptide spans 1–16 (MKHSVLAGLFATGALA). One can recognise a CBM1 domain in the interval 17–52 (QGGAWQQCGGVGFSGSTSCVSGYTCVYLNDWYSQCQ). Cystine bridges form between cysteine 24–cysteine 41 and cysteine 35–cysteine 51. The interval 53-91 (PQPTTLRTTTTPGATSTTRSAPAATSTTPAKGKFKWFGI) is linker. Positions 56–81 (TTLRTTTTPGATSTTRSAPAATSTTP) are disordered. N-linked (GlcNAc...) asparagine glycosylation is found at asparagine 92 and asparagine 155. Residues 92 to 388 (NQSCAEFGKG…YNSLLKKYVP (297 aa)) form a catalytic region. Glutamate 215 functions as the Proton donor in the catalytic mechanism. Residue asparagine 259 is glycosylated (N-linked (GlcNAc...) asparagine). Glutamate 322 (nucleophile) is an active-site residue.

This sequence belongs to the glycosyl hydrolase 5 (cellulase A) family.

It catalyses the reaction Endohydrolysis of (1-&gt;4)-beta-D-glucosidic linkages in cellulose, lichenin and cereal beta-D-glucans.. In Humicola insolens (Soft-rot fungus), this protein is Endoglucanase 3 (CMC3).